The sequence spans 286 residues: P2R1A-PPP2R2A-interacting phosphatase regulator 1 (286 aa).

The segment at Met1–Ser46 is disordered. A Phosphoserine modification is found at Ser34. At Ser36 the chain carries Phosphoserine; by CHEK1. Phosphoserine is present on residues Ser44, Ser47, Ser61, and Ser75. Lys88 is covalently cross-linked (Glycyl lysine isopeptide (Lys-Gly) (interchain with G-Cter in SUMO1)). Ser142 and Ser146 each carry phosphoserine. At Thr148 the chain carries Phosphothreonine. Residues Ser166 to Gln187 are disordered. Over residues Pro177 to Gln187 the composition is skewed to low complexity. Phosphoserine occurs at positions 186 and 188. A disordered region spans residues Val238–Lys286. Over residues Gly245–Ser256 the composition is skewed to low complexity. A compositionally biased stretch (polar residues) spans Ala258–Ser269. Phosphoserine occurs at positions 266, 269, and 275.

Belongs to the FAM122 family. Interacts with PPP2CA and PPP2R1A. Interacts (via its N-terminus) with PPP2R2A; the interaction is direct and this interaction inhibits PP2A activity. The CHEK1-mediated Ser-36 phosphorylated form interacts with 14-3-3 proteins. Post-translationally, CHEK1-mediated phosphorylation at Ser-36 negatively regulates its ability to inhibit serine/threonine-protein phosphatase 2A (PP2A) activity. Phosphorylation leads to its release from the PP2A complex and its sequestration by 14-3-3 proteins in the cytoplasm resulting in its inability to translocate to the nucleus, where it otherwise inhibits PP2A.

The protein localises to the nucleus. Its subcellular location is the cytoplasm. Acts as an inhibitor of serine/threonine-protein phosphatase 2A (PP2A) activity. Inhibits PP2A activity by blocking the substrate binding site on PPP2R2A and the active site of PPP2CA. Potentiates ubiquitin-mediated proteasomal degradation of serine/threonine-protein phosphatase 2A catalytic subunit alpha (PPP2CA). Inhibits PP2A-mediated dephosphorylation of WEE1, promoting ubiquitin-mediated proteolysis of WEE1, thereby releasing G2/M checkpoint. The protein is P2R1A-PPP2R2A-interacting phosphatase regulator 1 of Rattus norvegicus (Rat).